Consider the following 340-residue polypeptide: Phenylalanine--tRNA ligase alpha subunit (340 aa).

E255 serves as a coordination point for Mg(2+).

It belongs to the class-II aminoacyl-tRNA synthetase family. Phe-tRNA synthetase alpha subunit type 1 subfamily. As to quaternary structure, tetramer of two alpha and two beta subunits. Requires Mg(2+) as cofactor.

Its subcellular location is the cytoplasm. It carries out the reaction tRNA(Phe) + L-phenylalanine + ATP = L-phenylalanyl-tRNA(Phe) + AMP + diphosphate + H(+). The protein is Phenylalanine--tRNA ligase alpha subunit of Desulfitobacterium hafniense (strain Y51).